A 216-amino-acid polypeptide reads, in one-letter code: Pyridoxine/pyridoxamine 5'-phosphate oxidase (216 aa).

Substrate-binding positions include 12–15 (RREY) and Lys-70. FMN-binding positions include 65-70 (RLVLLK), 80-81 (YT), Arg-86, Lys-87, and Gln-109. Substrate-binding residues include Tyr-127, Arg-131, and Ser-135. Residues 144–145 (QS) and Trp-189 each bind FMN. 195–197 (RLH) is a substrate binding site. Arg-199 lines the FMN pocket.

This sequence belongs to the pyridoxamine 5'-phosphate oxidase family. In terms of assembly, homodimer. It depends on FMN as a cofactor.

It carries out the reaction pyridoxamine 5'-phosphate + O2 + H2O = pyridoxal 5'-phosphate + H2O2 + NH4(+). The catalysed reaction is pyridoxine 5'-phosphate + O2 = pyridoxal 5'-phosphate + H2O2. It participates in cofactor metabolism; pyridoxal 5'-phosphate salvage; pyridoxal 5'-phosphate from pyridoxamine 5'-phosphate: step 1/1. Its pathway is cofactor metabolism; pyridoxal 5'-phosphate salvage; pyridoxal 5'-phosphate from pyridoxine 5'-phosphate: step 1/1. Functionally, catalyzes the oxidation of either pyridoxine 5'-phosphate (PNP) or pyridoxamine 5'-phosphate (PMP) into pyridoxal 5'-phosphate (PLP). This chain is Pyridoxine/pyridoxamine 5'-phosphate oxidase, found in Baumannia cicadellinicola subsp. Homalodisca coagulata.